The chain runs to 732 residues: MGRREEMIAKIKELMLQPERIRNIGIAAHIDHGKTTLSDNLLAGAGMISEELAGKQLVLDFDEQEQARGITINAANVSMVHNYEGKDYLINLIDTPGHVDFGGDVTRAMRAIDGVIIVVDAVEGVMPQTETVVRQALREYVKPVLFINKVDRLIRELKLTPQQMMERFSKIIMDVNRLIQRYAPEEYKKKWMVKVEDGSVAFGSAYYNWALSVPFMKRTGVKFNEIIDLTLKGDNRTLRQKAPLHVVVLDMVVRHLPSPIEAQKYRIPHLWEGDISSDIGQAMLNCDPKGKMVMVVTKIIIDKHAGEVATGRVWSGTVKSGQEVYLINTKRKARIQQVGIYMGPERINMEAVPAGNIVAVTGLRDAMAGETVAEEQIEPFEALHYVSEPVVTVAIEAKNVKDLPRLIEALRQLAKEDPTLHVKIDEETGQHLLSGMGELHLEVKLYKLKKDWGIDIEVSEPIVVYRESITKSSPMVEGKSPNRHNRFYIVVEPMPDEIYNAIKEGIIPEGRVKNPKEVAKKLAELGMDYEIARGIVDIYNGNMFIDNTKGVQYLNEVMDLLIDGFHQAMDEGPLAREPVMKVIVRLLDAQVHEDNVHRGPAQIYPAIRTAIHCAMMKSNPVLYEPYQKVIINIPYEYMGAVSREITQRRGQLVDMKQEGEVMTIIAEAPVAEMFGFAGSIRSATSGRALWSTEHAGFKRVPNELAQQIIRQIRQRKGLDPNPPTEKDVCPLF.

Residues Glu-19–Ile-260 enclose the tr-type G domain. Residues Ala-28–Thr-35, Asp-94–His-98, and Asn-148–Asp-151 contribute to the GTP site. His-597 is modified (diphthamide).

The protein belongs to the TRAFAC class translation factor GTPase superfamily. Classic translation factor GTPase family. EF-G/EF-2 subfamily.

It localises to the cytoplasm. Its function is as follows. Catalyzes the GTP-dependent ribosomal translocation step during translation elongation. During this step, the ribosome changes from the pre-translocational (PRE) to the post-translocational (POST) state as the newly formed A-site-bound peptidyl-tRNA and P-site-bound deacylated tRNA move to the P and E sites, respectively. Catalyzes the coordinated movement of the two tRNA molecules, the mRNA and conformational changes in the ribosome. This chain is Elongation factor 2 (fusA), found in Pyrococcus horikoshii (strain ATCC 700860 / DSM 12428 / JCM 9974 / NBRC 100139 / OT-3).